The sequence spans 614 residues: Zinc metalloproteinase-disintegrin-like HR1b (614 aa).

The first 20 residues, 1-20 (MIQVLLVTICLAVFPYQGSS), serve as a signal peptide directing secretion. The propeptide occupies 21 to 191 (IILESGNVND…KASKLVVTAE (171 aa)). The residue at position 192 (glutamine 192) is a Pyrrolidone carboxylic acid. In terms of domain architecture, Peptidase M12B spans 198–394 (RYIKLAIVVD…HKPQCILNAP (197 aa)). An N-linked (GlcNAc...) asparagine glycan is attached at asparagine 264. Disulfide bonds link cysteine 309/cysteine 389, cysteine 349/cysteine 373, and cysteine 351/cysteine 356. Zn(2+) is bound at residue histidine 334. The active site involves glutamate 335. Residues histidine 338 and histidine 344 each contribute to the Zn(2+) site. N-linked (GlcNAc...) asparagine glycosylation is present at asparagine 372. The propeptide occupies 395–398 (SKTD). Positions 402–488 (PPVCGNELLE…DCPTDRFHRN (87 aa)) constitute a Disintegrin domain. Residues valine 404, asparagine 407, leucine 409, glutamate 411, glutamate 414, and aspartate 417 each coordinate Ca(2+). 22 cysteine pairs are disulfide-bonded: cysteine 405-cysteine 424, cysteine 405-cysteine 434, cysteine 416-cysteine 429, cysteine 416-cysteine 434, cysteine 418-cysteine 424, cysteine 428-cysteine 451, cysteine 442-cysteine 448, cysteine 447-cysteine 473, cysteine 460-cysteine 480, cysteine 467-cysteine 492, cysteine 467-cysteine 499, cysteine 492-cysteine 504, cysteine 499-cysteine 504, cysteine 511-cysteine 526, cysteine 511-cysteine 561, cysteine 526-cysteine 568, cysteine 539-cysteine 549, cysteine 549-cysteine 556, cysteine 556-cysteine 593, cysteine 561-cysteine 568, cysteine 587-cysteine 598, and cysteine 593-cysteine 598. Positions 466–468 (ECD) match the D/ECD-tripeptide motif. The N-linked (GlcNAc...) asparagine glycan is linked to asparagine 518. Asparagine 571 carries N-linked (GlcNAc...) asparagine glycosylation. Residues 608–614 (TTVFSLI) constitute a propeptide that is removed on maturation.

Belongs to the venom metalloproteinase (M12B) family. P-III subfamily. P-IIIb sub-subfamily. Monomer. Requires Zn(2+) as cofactor. As to expression, expressed by the venom gland.

It localises to the secreted. In terms of biological role, zinc protease that induces hemorrhage. Has preference for Tyr, Leu, Arg, Met, and Phe at the P1 position, in descending order (in vitro). Shows equal preference for the sequences of Ala-Asp and Arg-Ile at the P3-P2 position with different enzyme cleavage sites across the P1 position: the N-terminus side for Ala-Asp and the C-terminus side for Arg-Ile. Its function is as follows. Inhibits platelet aggregation induced by ADP, thrombin, platelet-activating factor and collagen. Acts by inhibiting fibrinogen interaction with platelet receptors alpha-IIb/beta-3 (ITGA2B/ITGB3). The polypeptide is Zinc metalloproteinase-disintegrin-like HR1b (Protobothrops flavoviridis (Habu)).